A 102-amino-acid polypeptide reads, in one-letter code: Small ribosomal subunit protein uS10 (102 aa).

Belongs to the universal ribosomal protein uS10 family. As to quaternary structure, part of the 30S ribosomal subunit.

In terms of biological role, involved in the binding of tRNA to the ribosomes. The sequence is that of Small ribosomal subunit protein uS10 from Macrococcus caseolyticus (strain JCSC5402) (Macrococcoides caseolyticum).